The sequence spans 1446 residues: Bud site selection protein 4 (1446 aa).

Disordered regions lie at residues 69-103 (NQWN…TNLL), 358-385 (VSEE…NPSS), 425-446 (DNNI…SGKE), 495-525 (ASED…QNLE), 823-844 (SSSL…SQAF), and 1025-1044 (KKNT…RVSS). Positions 86–98 (NYDDDEEQGDESD) are enriched in acidic residues. Polar residues-rich tracts occupy residues 425–434 (DNNISKSAND) and 495–524 (ASED…QQNL). Over residues 1028 to 1044 (TQKDLKDGTTAEKRVSS) the composition is skewed to basic and acidic residues. The 112-residue stretch at 1314–1425 (DITKEGYLLQ…WYMKLKEVVE (112 aa)) folds into the PH domain.

The protein belongs to the BUD4 family.

Its subcellular location is the bud neck. Its function is as follows. Required for selection of future bud sites. Cooperates with other bud site selection proteins to recognize a spatial landmark during mitosis and they subsequently become a landmark for downstream polarity establishment factors that coordinate budding and cytokinesis. Involved in the septin organization at the bud neck. The polypeptide is Bud site selection protein 4 (BUD4) (Candida glabrata (strain ATCC 2001 / BCRC 20586 / JCM 3761 / NBRC 0622 / NRRL Y-65 / CBS 138) (Yeast)).